Reading from the N-terminus, the 1075-residue chain is Protein nervous wreck (1075 aa).

The 279-residue stretch at 11–289 (VKFLKNLHTE…QAQQLTREYN (279 aa)) folds into the F-BAR domain. Disordered regions lie at residues 361–381 (LRDS…LDTK) and 431–536 (SASS…DEPI). The span at 431–453 (SASSISMRTDASGQGENPSSDSF) shows a compositional bias: polar residues. Basic and acidic residues predominate over residues 469-482 (PKQEQQLSRDRTFS). Residues 493–512 (SAAAASSAAAASSSMMASSA) show a composition bias toward low complexity. 2 consecutive SH3 domains span residues 542–603 (EAIF…IDQE) and 658–721 (SDVE…ECDE). Disordered stretches follow at residues 722-747 (MGEP…LPPA), 769-837 (SQDT…EKGA), and 864-917 (GADK…EGNA). Pro residues-rich tracts occupy residues 733–747 (SPPP…LPPA) and 809–818 (QPPPSLPPPQ). Residues 819 to 837 (LAKAGGSAPGSGSKVEKGA) are compositionally biased toward low complexity. Positions 883–897 (VSKEQPAEVAKKPDI) are enriched in basic and acidic residues.

In terms of assembly, homodimer. Interacts (via SH3 domain 1) with WASp. Interacts (via SH3 domain 1) with shi/dynamin. Interacts (via SH3 domain 2) with Dap160. Interacts (via F-BAR domain) with SH3PX1. Interacts (via SH3 domain 2) with Snx16. Identified in a complex with Syn and Syt1. As to expression, detected in larval body wall muscle. Detected at the neuromuscular junction, on motoneuron axons and axon terminals, at synaptic boutons in the periactive zone surrounding the synapse (at protein level). Detected on motoneuron axons and axon terminals, at synaptic boutons in the periactive zone surrounding the synapse.

Its subcellular location is the endomembrane system. It localises to the synapse. It is found in the cell projection. The protein resides in the axon. The protein localises to the presynaptic cell membrane. Its subcellular location is the cytoplasmic vesicle. It localises to the secretory vesicle. It is found in the synaptic vesicle. The protein resides in the recycling endosome. Adapter protein that provides a link between vesicular membrane traffic and the actin assembly machinery. Acts together with Cdc42 to stimulate actin nucleation mediated by WASp and the ARP2/3 complex. Binds to membranes enriched in phosphatidylinositol 4,5-bisphosphate and causes local membrane deformation. Required for normal structure and function of synapses at the neuromuscular junction. Plays a role in synaptic vesicle trafficking. Required for the release of a normal number of synaptic vesicles per action potential. The protein is Protein nervous wreck of Drosophila melanogaster (Fruit fly).